Reading from the N-terminus, the 97-residue chain is Aspartyl/glutamyl-tRNA(Asn/Gln) amidotransferase subunit C (97 aa).

This sequence belongs to the GatC family. As to quaternary structure, heterotrimer of A, B and C subunits.

It catalyses the reaction L-glutamyl-tRNA(Gln) + L-glutamine + ATP + H2O = L-glutaminyl-tRNA(Gln) + L-glutamate + ADP + phosphate + H(+). The catalysed reaction is L-aspartyl-tRNA(Asn) + L-glutamine + ATP + H2O = L-asparaginyl-tRNA(Asn) + L-glutamate + ADP + phosphate + 2 H(+). Allows the formation of correctly charged Asn-tRNA(Asn) or Gln-tRNA(Gln) through the transamidation of misacylated Asp-tRNA(Asn) or Glu-tRNA(Gln) in organisms which lack either or both of asparaginyl-tRNA or glutaminyl-tRNA synthetases. The reaction takes place in the presence of glutamine and ATP through an activated phospho-Asp-tRNA(Asn) or phospho-Glu-tRNA(Gln). The polypeptide is Aspartyl/glutamyl-tRNA(Asn/Gln) amidotransferase subunit C (Prochlorococcus marinus (strain MIT 9211)).